We begin with the raw amino-acid sequence, 301 residues long: Mitochondrial substrate carrier family protein Z (301 aa).

Residues 1–19 (MTGKEENKQQQHVNFPWKR) are Mitochondrial intermembrane-facing. Solcar repeat units follow at residues 14–101 (NFPW…FTEQ), 116–200 (QQFG…ISDY), and 210–293 (LPVW…VMGI). Residues 20–37 (LVAGAVAGTADVWACHPL) traverse the membrane as a helical segment. The Mitochondrial matrix segment spans residues 38–65 (DRIKTQLQNNPGKSIVGTFGDIVSKGKG). Residues 66–86 (FTGGVNALYEGILPMTAEAIF) form a helical membrane-spanning segment. Residues 87-117 (KVGIRYFAFSWFTEQYKTTVYKGETLNKKQQ) lie on the Mitochondrial intermembrane side of the membrane. A helical transmembrane segment spans residues 118–138 (FGANLLGGAFAGTIESFVVVI). At 139–174 (PCELLKVRHMTQEHNKSFGTVFRDVLREEGFQGLYK) the chain is on the mitochondrial matrix side. Residues 175–191 (GGSATLLRQITNHMIRF) form a helical membrane-spanning segment. Over 192-212 (PTFYAISDYLKGGDHSVHLPV) the chain is Mitochondrial intermembrane. Residues 213-229 (WQNLSAGAIAGTASTLF) traverse the membrane as a helical segment. At 230–275 (NNPLDTIKTRMQKQGQNQTTMQVVRGIYQETGVKGYWAGVIPRILR) the chain is on the mitochondrial matrix side. The chain crosses the membrane as a helical span at residues 276-296 (VAPGQAITWAVVELVMGILEP). The Mitochondrial intermembrane segment spans residues 297–301 (SSKKH).

Belongs to the mitochondrial carrier (TC 2.A.29) family.

The protein localises to the mitochondrion inner membrane. Functionally, mitochondrial solute carriers shuttle metabolites, nucleotides, and cofactors through the mitochondrial inner membrane. The protein is Mitochondrial substrate carrier family protein Z (mcfZ) of Dictyostelium discoideum (Social amoeba).